The sequence spans 79 residues: MAVKLRLTRMGNKKRAFYRIVAVNSETRRDGRPLEYIGFYNPMVDPAEVKIDAEKVQKWLALGAEPTDTVRNLIKKQQA.

Belongs to the bacterial ribosomal protein bS16 family.

In Nitratidesulfovibrio vulgaris (strain ATCC 29579 / DSM 644 / CCUG 34227 / NCIMB 8303 / VKM B-1760 / Hildenborough) (Desulfovibrio vulgaris), this protein is Small ribosomal subunit protein bS16.